The primary structure comprises 358 residues: Putative myc-like protein MYCLP1 (358 aa).

Disordered regions lie at residues 150–171 (ACSR…TVKK) and 219–245 (QEGA…DKED). Over residues 227 to 242 (PPKEALEREAPGGKDD) the composition is skewed to basic and acidic residues. Positions 274–326 (WTKKKYHSYLERKRRNDQRSRFLALRDEVPALASCSRVSKVMILVKATEYLHE) constitute a bHLH domain.

In terms of assembly, efficient DNA binding requires dimerization with another bHLH protein. Binds DNA as a heterodimer with MAX. Detected in adult testis.

It is found in the nucleus. The polypeptide is Putative myc-like protein MYCLP1 (MYCLP1) (Homo sapiens (Human)).